A 64-amino-acid polypeptide reads, in one-letter code: Large ribosomal subunit protein bL35 (64 aa).

Residues 1–28 are disordered; sequence MPKMKTHSGAKKRFKLTGSGKLKRQQAN.

This sequence belongs to the bacterial ribosomal protein bL35 family.

This chain is Large ribosomal subunit protein bL35, found in Renibacterium salmoninarum (strain ATCC 33209 / DSM 20767 / JCM 11484 / NBRC 15589 / NCIMB 2235).